The primary structure comprises 430 residues: Serine--tRNA ligase (430 aa).

L-serine is bound at residue 235–237; the sequence is TSE. 266–268 provides a ligand contact to ATP; it reads RSE. Glu289 contacts L-serine. 353–356 contributes to the ATP binding site; the sequence is EISS. Ser388 is an L-serine binding site.

This sequence belongs to the class-II aminoacyl-tRNA synthetase family. Type-1 seryl-tRNA synthetase subfamily. In terms of assembly, homodimer. The tRNA molecule binds across the dimer.

It is found in the cytoplasm. It catalyses the reaction tRNA(Ser) + L-serine + ATP = L-seryl-tRNA(Ser) + AMP + diphosphate + H(+). The enzyme catalyses tRNA(Sec) + L-serine + ATP = L-seryl-tRNA(Sec) + AMP + diphosphate + H(+). Its pathway is aminoacyl-tRNA biosynthesis; selenocysteinyl-tRNA(Sec) biosynthesis; L-seryl-tRNA(Sec) from L-serine and tRNA(Sec): step 1/1. Its function is as follows. Catalyzes the attachment of serine to tRNA(Ser). Is also able to aminoacylate tRNA(Sec) with serine, to form the misacylated tRNA L-seryl-tRNA(Sec), which will be further converted into selenocysteinyl-tRNA(Sec). The polypeptide is Serine--tRNA ligase (Azoarcus sp. (strain BH72)).